The primary structure comprises 197 residues: Beta-crystallin A2 (197 aa).

Residues 1-11 are N-terminal arm; it reads MSSASAPGPAP. Beta/gamma crystallin 'Greek key' domains are found at residues 12–52 and 53–99; these read ACLT…KVEN and GAWV…RPVL. Positions 100-105 are connecting peptide; it reads CANHSD. Beta/gamma crystallin 'Greek key' domains lie at 106 to 147 and 148 to 196; these read SRVT…KVSS and GAWV…RRVQ.

It belongs to the beta/gamma-crystallin family. In terms of assembly, homo/heterodimer, or complexes of higher-order. The structure of beta-crystallin oligomers seems to be stabilized through interactions between the N-terminal arms.

In terms of biological role, crystallins are the dominant structural components of the vertebrate eye lens. This Oryctolagus cuniculus (Rabbit) protein is Beta-crystallin A2 (CRYBA2).